The primary structure comprises 523 residues: Frizzled-4 (523 aa).

The first 22 residues, 1 to 22 (MGARSLTLLYLLCCLVVGLIAG), serve as a signal peptide directing secretion. The Extracellular portion of the chain corresponds to 23-198 (FGEEEERSCD…KCGYDSGLYN (176 aa)). In terms of domain architecture, FZ spans 26–147 (EEERSCDPIR…NDHNHMCMEG (122 aa)). Cystine bridges form between cysteine 31/cysteine 92, cysteine 39/cysteine 85, cysteine 76/cysteine 114, cysteine 103/cysteine 144, cysteine 107/cysteine 131, cysteine 167/cysteine 186, cysteine 190/cysteine 268, and cysteine 288/cysteine 363. A glycan (N-linked (GlcNAc...) asparagine) is linked at asparagine 45. A glycan (N-linked (GlcNAc...) asparagine) is linked at asparagine 130. A helical transmembrane segment spans residues 199 to 229 (RLSKEFTDIWMAVWASLCFISTAFTVLTFLI). Topologically, residues 230-235 (DSSRFC) are cytoplasmic. Residues 236 to 261 (YPERPIIFLSMCYNIYSIAYIVRLTV) form a helical membrane-spanning segment. The Extracellular portion of the chain corresponds to 262 to 285 (GRERISCDFEEAAEPVLIQEGLKN). The chain crosses the membrane as a helical span at residues 286–319 (TGCAIIFLLMYFFGMASSIWWVILTLTWFLAAGL). Residues 320 to 322 (KWG) lie on the Cytoplasmic side of the membrane. The helical transmembrane segment at 323 to 351 (HEAIEMHSSYFHIAAWAIPAVKTIVILIM) threads the bilayer. Topologically, residues 352–369 (RLVDADELTGLCYVGNQN) are extracellular. Residues 370–396 (IDALTGFVVAPLFTYLVIGTLFIAAGL) traverse the membrane as a helical segment. Residues 397–417 (VALFKIRSNLQKDGTKTDKLE) lie on the Cytoplasmic side of the membrane. The helical transmembrane segment at 418–443 (RLMVKIGVFSVLYTVPATCVIACYFY) threads the bilayer. Residues 444–459 (EVSNWNVFRYTADDSN) are Extracellular-facing. A helical transmembrane segment spans residues 460 to 481 (MAVEMLNIFMSLLVGITSGMWI). Topologically, residues 482–523 (WSAKTLHTWQKCTNRLVNSGKVKRKKRVDGWVKPGKGNETVV) are cytoplasmic. Residues 485–490 (KTLHTW) carry the Lys-Thr-X-X-X-Trp motif, mediates interaction with the PDZ domain of Dvl family members motif. The PDZ-binding motif lies at 521-523 (TVV).

This sequence belongs to the G-protein coupled receptor Fz/Smo family. In terms of assembly, interacts (via FZ domain) with tsku; tsku competes with wnt2b for binding to fzd4, inhibiting Wnt signaling and repressing peripheral eye development.

The protein resides in the cell membrane. Receptor for Wnt proteins. Most frizzled receptors are coupled to the beta-catenin canonical signaling pathway, which leads to the activation of disheveled proteins, inhibition of GSK-3 kinase, nuclear accumulation of beta-catenin and activation of Wnt target genes. A second signaling pathway involving PKC and calcium fluxes has been seen for some family members, but it is not yet clear if it represents a distinct pathway or if it can be integrated in the canonical pathway, as PKC seems to be required for Wnt-mediated inactivation of GSK-3 kinase. Both pathways seem to involve interactions with G-proteins. May be involved in transduction and intercellular transmission of polarity information during tissue morphogenesis and/or in differentiated tissues. Activated by Wnt5A. The protein is Frizzled-4 (fzd4) of Xenopus laevis (African clawed frog).